The following is a 719-amino-acid chain: MIVDKLLDDSRGGEGLLDAAGDCGLMTSPLNLAYFYGASPPAAAPGACDGGCSASGPSAPGSPGSDSSDFSSASSVSSCGAVESRPRGGARAERLQVEPHMGVVRQQRGPFQGVRVKNSVKELLLHIRSHKQKASGQAVDDFKTQSVNREQFTELKNTVSYSGKRKGSDSLSDGPACKRSALLHTQFLTPPQTPTPAESMEDVHHNESKQDSCADLLQNIINIKNECSPVSLNTVQVSWMSPGEVPQGSPHEQCQDLHRGQVFSPPQKYQPFQVSSSPHMMDQASMYQYSPQNQSVQPPPQHYTHNPALEYSPYSRTSQSPSYEPHLFGREPQFCPDQSFAPLLSDPRQSENIAVPPQTAPSVQQQIDTHLQNFSLMPPDTCEALARPDASSTPLSTPLPFPNLGGNPMSTTQLGKSFFQWQVEQEENKLANISQDQFLSKDADGDTFLHIAVAQGRRALSYVLARKMNALHMLDIKEHNGQSAFQVAVAANQHLIVQDLVTLGAQVNTTDCWGRTPLHVCAEKGHSQVLQAIQKGAAGSNQFVDLEATNYDGLTPLHCAVLAHNAVVHELQRNQQPHSPEVQELLLKNKSLVDTIKCLIQMGAAVEAKDRKSGRTALHLAAEEANLELIRLFLELPSCLSFVNAKAYNGNTALHVAASLQYRVTQLDAVRLLMRKGADPSTRNLENEQPVHLVPDGPVGEQIRRILKGKSIQQRAPPY.

Residues 46 to 81 (GACDGGCSASGPSAPGSPGSDSSDFSSASSVSSCGA) show a composition bias toward low complexity. Positions 46-97 (GACDGGCSASGPSAPGSPGSDSSDFSSASSVSSCGAVESRPRGGARAERLQV) are disordered. A compositionally biased stretch (basic and acidic residues) spans 84–97 (SRPRGGARAERLQV). Positions 108–130 (RGPFQGVRVKNSVKELLLHIRSH) constitute an OCA domain. The short motif at 164–179 (KRKGSDSLSDGPACKR) is the Nuclear localization signal element. 2 disordered regions span residues 188 to 210 (LTPPQTPTPAESMEDVHHNESKQ) and 289 to 343 (YSPQ…FAPL). Residues 201–210 (EDVHHNESKQ) show a composition bias toward basic and acidic residues. The segment at 322 to 394 (SYEPHLFGRE…LARPDASSTP (73 aa)) is required for transcriptional activity. Positions 405–719 (GGNPMSTTQL…KSIQQRAPPY (315 aa)) are interaction with NFKB1/p50. ANK repeat units follow at residues 444-473 (DGDTFLHIAVAQGRRALSYVLARKMNALHM), 480-509 (NGQSAFQVAVAANQHLIVQDLVTLGAQVNT), 513-542 (WGRTPLHVCAEKGHSQVLQAIQKGAAGSNQ), 552-581 (DGLTPLHCAVLAHNAVVHELQRNQQPHSPE), 583-608 (QELLLKNKSLVDTIKCLIQMGAAVEA), 613-642 (SGRTALHLAAEEANLELIRLFLELPSCLSF), and 649-682 (NGNTALHVAASLQYRVTQLDAVRLLMRKGADPST).

In terms of assembly, interacts with NFKB1/p50. Interacts with RELA. Interacts with AKIRIN2.

The protein localises to the nucleus. Functionally, involved in regulation of NF-kappa-B transcription factor complexes. Inhibits NF-kappa-B activity without affecting its nuclear translocation upon stimulation. Inhibits DNA-binding of RELA and NFKB1/p50, and of the NF-kappa-B p65-p50 heterodimer and the NF-kappa-B p50-p50 homodimer. Also seems to activate NF-kappa-B-mediated transcription. In vitro, upon association with NFKB1/p50 has transcriptional activation activity and, together with NFKB1/p50 and RELA, is recruited to LCN2 promoters. Promotes transcription of LCN2 and DEFB4. Is recruited to IL-6 promoters and activates IL-6 but decreases TNF-alpha production in response to LPS. Seems to be involved in the induction of inflammatory genes activated through TLR/IL-1 receptor signaling. Involved in the induction of T helper 17 cells (Th17) differentiation upon recognition of antigen by T cell antigen receptor (TCR). This Bos taurus (Bovine) protein is NF-kappa-B inhibitor zeta (NFKBIZ).